A 471-amino-acid polypeptide reads, in one-letter code: Putative multidrug resistance protein MdtD (471 aa).

Topologically, residues 1–11 (MTDLPDSTRWQ) are periplasmic. Residues 12–32 (LWIVAFGFFMQSLDTTIVNTA) traverse the membrane as a helical segment. Residues 33-48 (LPSMAQSLGESPLHMH) are Cytoplasmic-facing. The helical transmembrane segment at 49-69 (MVIVSYVLTVAVMLPASGWLA) threads the bilayer. The Periplasmic segment spans residues 70 to 76 (DKVGVRN). The helical transmembrane segment at 77–97 (IFFTAIVLFTLGSLFCALSGT) threads the bilayer. The Cytoplasmic portion of the chain corresponds to 98-101 (LNEL). A helical membrane pass occupies residues 102–124 (LLARALQGVGGAMMVPVGRLTVM). Over 125 to 137 (KIVPREQYMAAMT) the chain is Periplasmic. The helical transmembrane segment at 138-158 (FVTLPGQVGPLLGPALGGLLV) threads the bilayer. At 159–164 (EYASWH) the chain is on the cytoplasmic side. Residues 165–185 (WIFLINIPVGIIGAIATLMLM) form a helical membrane-spanning segment. Topologically, residues 186–196 (PNYTMQTRRFD) are periplasmic. A helical transmembrane segment spans residues 197–217 (LSGFLLLAVGMAVLTLALDGS). At 218 to 224 (KGTGLSP) the chain is on the cytoplasmic side. The helical transmembrane segment at 225-245 (LTIAGLVAVGVVALVLYLLHA) threads the bilayer. The Periplasmic segment spans residues 246 to 262 (RNNNRALFSLKLFRTRT). Residues 263-283 (FSLGLAGSFAGRIGSGMLPFM) form a helical membrane-spanning segment. Topologically, residues 284–285 (TP) are cytoplasmic. The chain crosses the membrane as a helical span at residues 286-306 (VFLQIGLGFSPFHAGLMMIPM). At 307 to 341 (VLGSMGMKRIVVQVVNCFGYRRVLVATTLGLSLVT) the chain is on the periplasmic side. The chain crosses the membrane as a helical span at residues 342-362 (LLFMTTALLGWYYVLPFVLFL). The Cytoplasmic portion of the chain corresponds to 363–395 (QGMVNSTRFSSMNTLTLKDLPDNLASSGNSLLS). The chain crosses the membrane as a helical span at residues 396-416 (MIMQLSMSIGVTIAGLLLGLF). Residues 417 to 430 (GSQHVSVDSGTTQT) are Periplasmic-facing. The helical transmembrane segment at 431–451 (VFMYTWLSMALIIALPAFIFA) threads the bilayer. Topologically, residues 452–471 (RVPNDTHQNVAISRRKRSAQ) are cytoplasmic.

The protein belongs to the major facilitator superfamily. TCR/Tet family.

It is found in the cell inner membrane. This Escherichia coli O139:H28 (strain E24377A / ETEC) protein is Putative multidrug resistance protein MdtD.